A 237-amino-acid chain; its full sequence is Phosphoribosylaminoimidazole-succinocarboxamide synthase (237 aa).

The protein belongs to the SAICAR synthetase family.

It catalyses the reaction 5-amino-1-(5-phospho-D-ribosyl)imidazole-4-carboxylate + L-aspartate + ATP = (2S)-2-[5-amino-1-(5-phospho-beta-D-ribosyl)imidazole-4-carboxamido]succinate + ADP + phosphate + 2 H(+). Its pathway is purine metabolism; IMP biosynthesis via de novo pathway; 5-amino-1-(5-phospho-D-ribosyl)imidazole-4-carboxamide from 5-amino-1-(5-phospho-D-ribosyl)imidazole-4-carboxylate: step 1/2. The polypeptide is Phosphoribosylaminoimidazole-succinocarboxamide synthase (Citrobacter koseri (strain ATCC BAA-895 / CDC 4225-83 / SGSC4696)).